We begin with the raw amino-acid sequence, 185 residues long: Prenylated Rab acceptor protein 1 (185 aa).

Over 1-78 (MAVEKDQQKD…RNVEYYQSNY (78 aa)) the chain is Cytoplasmic. The interval 30–54 (AGREWLERRRATIRSWGSFVDQRRF) is required for interaction with prenylated RAB3A and VAMP2. A run of 2 helical transmembrane segments spans residues 79-94 (VFVF…ATSP) and 95-112 (MLLV…ILYL). Residues 113–131 (RTLQSKFVLFGREVSPAHQ) lie on the Cytoplasmic side of the membrane. 2 helical membrane passes run 132–148 (YALA…LAGA) and 149–165 (GSAV…VIGS). Residues 165-185 (SHAAFHQIEAVDGEELQMEPV) are required for interaction with GDI1. Residues 166-185 (HAAFHQIEAVDGEELQMEPV) lie on the Cytoplasmic side of the membrane. The interval 175–185 (VDGEELQMEPV) is required for interaction with prenylated RAB3A and VAMP2. The homodimerization stretch occupies residues 175 to 185 (VDGEELQMEPV).

It belongs to the PRA1 family. Homodimer. Interacts with VAMP2 (synaptobrevin-2), prenylated Rab proteins, GDI1, NDRG1 and PCLO.

It is found in the cell membrane. The protein resides in the cytoplasm. The protein localises to the golgi apparatus. It localises to the cytoplasmic vesicle. Its subcellular location is the secretory vesicle. It is found in the synaptic vesicle. General Rab protein regulator required for vesicle formation from the Golgi complex. May control vesicle docking and fusion by mediating the action of Rab GTPases to the SNARE complexes. In addition it inhibits the removal of Rab GTPases from the membrane by GDI1. This Bos taurus (Bovine) protein is Prenylated Rab acceptor protein 1 (RABAC1).